The chain runs to 601 residues: Elongation factor 4 (601 aa).

The tr-type G domain occupies Gln-6–Lys-188. GTP-binding positions include Asp-18–Thr-23 and Asn-135–Asp-138.

It belongs to the TRAFAC class translation factor GTPase superfamily. Classic translation factor GTPase family. LepA subfamily.

It localises to the cell inner membrane. It carries out the reaction GTP + H2O = GDP + phosphate + H(+). Its function is as follows. Required for accurate and efficient protein synthesis under certain stress conditions. May act as a fidelity factor of the translation reaction, by catalyzing a one-codon backward translocation of tRNAs on improperly translocated ribosomes. Back-translocation proceeds from a post-translocation (POST) complex to a pre-translocation (PRE) complex, thus giving elongation factor G a second chance to translocate the tRNAs correctly. Binds to ribosomes in a GTP-dependent manner. The polypeptide is Elongation factor 4 (Leptospira borgpetersenii serovar Hardjo-bovis (strain JB197)).